A 117-amino-acid chain; its full sequence is Flagellar transcriptional regulator FlhD (117 aa).

It belongs to the FlhD family. Homodimer; disulfide-linked. Forms a heterohexamer composed of two FlhC and four FlhD subunits. Each FlhC binds a FlhD dimer, forming a heterotrimer, and a hexamer assembles by dimerization of two heterotrimers.

The protein resides in the cytoplasm. Functionally, functions in complex with FlhC as a master transcriptional regulator that regulates transcription of several flagellar and non-flagellar operons by binding to their promoter region. Activates expression of class 2 flagellar genes, including fliA, which is a flagellum-specific sigma factor that turns on the class 3 genes. Also regulates genes whose products function in a variety of physiological pathways. This chain is Flagellar transcriptional regulator FlhD, found in Photorhabdus laumondii subsp. laumondii (strain DSM 15139 / CIP 105565 / TT01) (Photorhabdus luminescens subsp. laumondii).